A 537-amino-acid chain; its full sequence is MKLIFLLLLFGVSPIVCQDFEDGVFLAKITSIDEHDARKIGRRFGFEAQWKLQSYTDVYVGRRLRRRKRGIEDEIVAEMMLSQQVQFIEKLQGFRRYKRAPMTNKGYPVHVWNLTPSLYIREAWEDGFNASRVTVAVVDDGVDIKHVDLKSAFSPRVSFDFVRFGDLPTPKNSKEFEHGTQCAGLVAMEGQQCGLGVGHGATLGAIKLLGQDFLNDALEGDALAFQKDLIDIYSVSWGPKDDGKSAEKPAKFTEEAIKNGALHGRNGKGNIFVWASGNGGVNGDNCAYDGYVSNEYTLSFGVIDASGAPAAYGEGCSSVLAAVSGGDAMIQTTGLESTCSSISGSSASAAIASGIISLVLDANPTLSQRDIQHLIARTSNASAIRDVELYENSAGLNFHPKVGFGLLNAQKLVVMAATWENVAPQVTCEKMNLANGIIDNSDCDVTKVERVIVSGSIIHPHRGQVQIRLESPRGTISELLPLRPKDTSRDLLDWNFVSVNFFGENSRGIWKLHVTSEEDDVDFRVEMKMFKVVGTMS.

The N-terminal stretch at 1 to 17 is a signal peptide; that stretch reads MKLIFLLLLFGVSPIVC. A propeptide spanning residues 18–99 is cleaved from the precursor; it reads QDFEDGVFLA…KLQGFRRYKR (82 aa). The Peptidase S8 domain maps to 111–413; it reads VWNLTPSLYI…FGLLNAQKLV (303 aa). An N-linked (GlcNAc...) asparagine glycan is attached at N129. Active-site charge relay system residues include D139 and H178. A disulfide bridge connects residues C286 and C316. S346 functions as the Charge relay system in the catalytic mechanism. N380 carries an N-linked (GlcNAc...) asparagine glycan. The region spanning 407–537 is the P/Homo B domain; the sequence is LNAQKLVVMA…KMFKVVGTMS (131 aa).

This sequence belongs to the peptidase S8 family. Furin subfamily.

Its subcellular location is the secreted. In terms of biological role, probable serine endoprotease which cleaves preproteins at paired basic amino acids. May process FMRFamide-like (flp) and neuropeptide-like protein (nlp) neuropeptides. In muscles, involved in neuronal retrograde signaling by regulating presynaptic activity and localization of synaptic vesicle fusion protein unc-13 at the neuromuscular junction (NMJ). Acts in the intestine to regulate anterior body muscle contractions (aBOC) and the expulsion steps during the defecation motor program (DMP). Probably by regulating DMP, required for fatty acid uptake by intestinal cells and therefore regulates the levels of triglycerides in the intestine. Plays a role in locomotion. The protein is Endoprotease aex-5 of Caenorhabditis elegans.